The sequence spans 375 residues: uncharacterized protein (375 aa).

The protein belongs to the IMPDH/GMPR family.

This is an uncharacterized protein from Mycobacterium leprae (strain TN).